Consider the following 534-residue polypeptide: Echilunin cytochrome P450 monooxygenase (534 aa).

Residues 18-38 (VSPAALSWAVVAIYLGTFFWL) traverse the membrane as a helical segment. Cysteine 441 contributes to the heme binding site.

The protein belongs to the cytochrome P450 family. Heme is required as a cofactor.

The protein localises to the membrane. The catalysed reaction is preechinulin + reduced [NADPH--hemoprotein reductase] + O2 = neoechinulin A + oxidized [NADPH--hemoprotein reductase] + 2 H2O + H(+). The protein operates within secondary metabolite biosynthesis. It participates in alkaloid biosynthesis. Cytochrome P450 monooxygenase; part of the gene cluster that mediates the biosynthesis of echinulin family alkaloid. The pathway begins with the biosynthesis of the cyclic dipeptide cyclo-L-Trp-L-Ala (cyclo-TA) by the NRPS echPS via condensation of L-alanine and L-tryptophan. The prenyltransferase echPT1 then catalyzes the first prenylation step, a reverse prenylation reaction at C2, to yield preechinulin. Preechinulin is the substrate of the cytochrome P450 monooxygenase echP450 that catalyzes the formation of the double bond between C10 and C11 to produce neoechulin A. The unique prenyltransferase echPT2 functions as a competitive enzyme with echP450 for preechinulin metabolization and uses preechinulin for effective regiospecific prenylations. Preechinulin is prenylated by echPT2 at C5 or C7. C7-prenylation leads to accumulation of tardioxopiperazine B without further modification by echPT2. In contrast, the C5-prenylated tardioxopiperazine A can be prenylated again by echPT2, predominantly at C7 to form echinulin or less frequently at C4 to give variecolorin L. EchPT2 also accepts neoechilunin A to produce varlecolorin G (prenylation at C5) or isoechinulin A (prenylation at C7). EchPT2 further converts isoechinulin A into dehydroechinulin. Moreover, a yet unidentified enzyme can also convert neoechilunin A into neoechilunin B by introducing a double bond between positions C14 and C17 and thus provides a further substrate to echPT2 for C5 and C7 prenylation. The sequence is that of Echilunin cytochrome P450 monooxygenase from Aspergillus ruber (strain CBS 135680).